Reading from the N-terminus, the 554-residue chain is Myo-inositol transporter 1 (554 aa).

Polar residues predominate over residues 1-13 (MGSSTNNTQSKAT). The disordered stretch occupies residues 1-57 (MGSSTNNTQSKATPSVLENEVNSSKSSVVSSTSSAKGLLRETTNHGTMETSSVQISE). 2 N-linked (GlcNAc...) asparagine glycosylation sites follow: asparagine 6 and asparagine 22. Over residues 15 to 34 (SVLENEVNSSKSSVVSSTSS) the composition is skewed to low complexity. Over residues 44 to 57 (NHGTMETSSVQISE) the composition is skewed to polar residues. The next 6 helical transmembrane spans lie at 65–85 (MVLV…YDTG), 110–130 (FITS…GVLA), 144–164 (IIFV…TMIA), 167–187 (FVLG…ISEL), 196–216 (LIVT…FINW), and 227–247 (VSVG…WFLP). N-linked (GlcNAc...) asparagine glycosylation is present at asparagine 279. A helical transmembrane segment spans residues 313-332 (GNFRALILACGLQGIQQFTG). Asparagine 351 carries N-linked (GlcNAc...) asparagine glycosylation. Helical transmembrane passes span 354 to 374 (AVSI…ICII), 382 to 402 (ILLV…VAFH), 420 to 440 (GWGI…AIGI), 459 to 479 (IGAM…ASTF), and 490 to 510 (GTFS…YFLL).

Belongs to the major facilitator superfamily. Sugar transporter (TC 2.A.1.1) family.

It localises to the cell membrane. It catalyses the reaction myo-inositol(out) + H(+)(out) = myo-inositol(in) + H(+)(in). In terms of biological role, major transporter for myo-inositol. This Candida albicans (strain SC5314 / ATCC MYA-2876) (Yeast) protein is Myo-inositol transporter 1.